Consider the following 341-residue polypeptide: UDP-3-O-(3-hydroxymyristoyl)glucosamine N-acyltransferase (341 aa).

Residue His239 is the Proton acceptor of the active site.

This sequence belongs to the transferase hexapeptide repeat family. LpxD subfamily. As to quaternary structure, homotrimer.

It catalyses the reaction a UDP-3-O-[(3R)-3-hydroxyacyl]-alpha-D-glucosamine + a (3R)-hydroxyacyl-[ACP] = a UDP-2-N,3-O-bis[(3R)-3-hydroxyacyl]-alpha-D-glucosamine + holo-[ACP] + H(+). It carries out the reaction UDP-3-O-[(3R)-3-hydroxytetradecanoyl]-alpha-D-glucosamine + (3R)-hydroxytetradecanoyl-[ACP] = UDP-2-N,3-O-bis[(3R)-3-hydroxytetradecanoyl]-alpha-D-glucosamine + holo-[ACP] + H(+). It participates in glycolipid biosynthesis; lipid IV(A) biosynthesis; lipid IV(A) from (3R)-3-hydroxytetradecanoyl-[acyl-carrier-protein] and UDP-N-acetyl-alpha-D-glucosamine: step 3/6. Catalyzes the N-acylation of UDP-3-O-(hydroxytetradecanoyl)glucosamine using 3-hydroxytetradecanoyl-ACP as the acyl donor. Is involved in the biosynthesis of lipid A, a phosphorylated glycolipid that anchors the lipopolysaccharide to the outer membrane of the cell. The polypeptide is UDP-3-O-(3-hydroxymyristoyl)glucosamine N-acyltransferase (Salmonella choleraesuis (strain SC-B67)).